A 452-amino-acid chain; its full sequence is UDP-glycosyltransferase 79B11 (452 aa).

UDP-alpha-D-glucose is bound by residues Ser-260, Val-319 to Gln-325, His-340 to Glu-348, and Leu-362 to Gln-365.

The protein belongs to the UDP-glycosyltransferase family.

The protein is UDP-glycosyltransferase 79B11 (UGT79B11) of Arabidopsis thaliana (Mouse-ear cress).